The sequence spans 355 residues: Isopentenyl-diphosphate delta-isomerase (355 aa).

Arg-9 to Lys-10 lines the substrate pocket. FMN contacts are provided by residues Ala-67–Thr-69, Ser-97, and Asn-125. Ser-97–Arg-99 serves as a coordination point for substrate. Gln-161 lines the substrate pocket. Glu-162 provides a ligand contact to Mg(2+). Residues Lys-197, Thr-227, Gly-276–Arg-278, and Ala-297–Leu-298 each bind FMN.

This sequence belongs to the IPP isomerase type 2 family. In terms of assembly, homooctamer. Dimer of tetramers. Requires FMN as cofactor. The cofactor is NADPH. Mg(2+) serves as cofactor.

The protein resides in the cytoplasm. It catalyses the reaction isopentenyl diphosphate = dimethylallyl diphosphate. Functionally, involved in the biosynthesis of isoprenoids. Catalyzes the 1,3-allylic rearrangement of the homoallylic substrate isopentenyl (IPP) to its allylic isomer, dimethylallyl diphosphate (DMAPP). The polypeptide is Isopentenyl-diphosphate delta-isomerase (Methanococcus maripaludis (strain DSM 14266 / JCM 13030 / NBRC 101832 / S2 / LL)).